Here is a 462-residue protein sequence, read N- to C-terminus: MAKFRRGTCIILALFILFIFSLMMGLKMLRPNTATFGAPFGLDLLPELHQRTVHLGKSFDFQKSDRINSETNTKNLKSVEITMKPSKASELNLDELPPLNNYLHVFYYSWYGNPQFDGKYIHWNHPVLEHWDPRIAKNYPQGRHNPPDDIGSSFYPELGSYSSRDPSVIETHMRQMRSASIGVLALSWYPPDVNDENGEPTDNLVPTILDKAHKYNLKVTFHIEPYSNRDDQNMYKNVKYIIDKYGNHPAFYRYKTKTGNALPMFYVYDSYITKPEKWANLLTTSGSWSIRNSPYDGLFIALLVEEKHKYDILQSGFDGIYTYFATNGFTYGSSHQNWASLKLFCDKYNLIFIPSVGPGYIDTSIRPWNTQNTRNRINGKYYEIALSAALQTHPSLISITSFNEWHEGTQIEKAVPKRTSNTVYLDYRPHKPGLYLELTRKWSEKYSKERATYALDHQLPVS.

The Cytoplasmic segment spans residues 1–8; it reads MAKFRRGT. A helical; Signal-anchor for type II membrane protein transmembrane segment spans residues 9–29; the sequence is CIILALFILFIFSLMMGLKML. Residues 30 to 462 are Lumenal-facing; sequence RPNTATFGAP…YALDHQLPVS (433 aa). Residues 60-462 are catalytic; it reads DFQKSDRINS…YALDHQLPVS (403 aa).

Belongs to the glycosyl hydrolase 99 family. In terms of processing, undergoes proteolytic cleavage in the C-terminal region.

Its subcellular location is the golgi apparatus membrane. The catalysed reaction is N-{alpha-Glc-(1-&gt;3)-alpha-Man-(1-&gt;2)-alpha-Man-(1-&gt;2)-alpha-Man-(1-&gt;3)-[alpha-Man-(1-&gt;2)-alpha-Man-(1-&gt;3)-[alpha-Man-(1-&gt;2)-alpha-Man-(1-&gt;6)]-alpha-Man-(1-&gt;6)]-beta-Man-(1-&gt;4)-beta-GlcNAc-(1-&gt;4)-beta-GlcNAc}-L-asparaginyl-[protein] + H2O = alpha-D-glucosyl-(1-&gt;3)-D-mannopyranose + N(4)-{alpha-D-Man-(1-&gt;2)-alpha-D-Man-(1-&gt;3)-[alpha-D-Man-(1-&gt;2)-alpha-D-Man-(1-&gt;3)-[alpha-D-Man-(1-&gt;2)-alpha-D-Man-(1-&gt;6)]-alpha-D-Man-(1-&gt;6)]-beta-D-Man-(1-&gt;4)-beta-D-GlaNAc-(1-&gt;4)-beta-D-GlcNAc}-L-asparaginyl-[protein] (N-glucan mannose isomer 8A1,2,3B1,2). The sequence is that of Glycoprotein endo-alpha-1,2-mannosidase (MANEA) from Pongo abelii (Sumatran orangutan).